Consider the following 403-residue polypeptide: Arginine biosynthesis bifunctional protein ArgJ (403 aa).

Substrate-binding residues include Thr-151, Lys-177, Thr-188, Glu-275, Asn-398, and Ser-403. Residue Thr-188 is the Nucleophile of the active site.

The protein belongs to the ArgJ family. In terms of assembly, heterotetramer of two alpha and two beta chains.

Its subcellular location is the cytoplasm. It carries out the reaction N(2)-acetyl-L-ornithine + L-glutamate = N-acetyl-L-glutamate + L-ornithine. The catalysed reaction is L-glutamate + acetyl-CoA = N-acetyl-L-glutamate + CoA + H(+). It functions in the pathway amino-acid biosynthesis; L-arginine biosynthesis; L-ornithine and N-acetyl-L-glutamate from L-glutamate and N(2)-acetyl-L-ornithine (cyclic): step 1/1. It participates in amino-acid biosynthesis; L-arginine biosynthesis; N(2)-acetyl-L-ornithine from L-glutamate: step 1/4. Catalyzes two activities which are involved in the cyclic version of arginine biosynthesis: the synthesis of N-acetylglutamate from glutamate and acetyl-CoA as the acetyl donor, and of ornithine by transacetylation between N(2)-acetylornithine and glutamate. The polypeptide is Arginine biosynthesis bifunctional protein ArgJ (Caulobacter vibrioides (strain ATCC 19089 / CIP 103742 / CB 15) (Caulobacter crescentus)).